Consider the following 141-residue polypeptide: Large ribosomal subunit protein uL16 (141 aa).

The tract at residues 1–23 (MLMPKRTKYRKQMKGRNRGKAHR) is disordered.

It belongs to the universal ribosomal protein uL16 family. As to quaternary structure, part of the 50S ribosomal subunit.

Functionally, binds 23S rRNA and is also seen to make contacts with the A and possibly P site tRNAs. The sequence is that of Large ribosomal subunit protein uL16 from Helicobacter pylori (strain P12).